We begin with the raw amino-acid sequence, 422 residues long: Testin (422 aa).

The 108-residue stretch at 92–199 folds into the PET domain; the sequence is MILTSPVAAK…GDVKLPKEVE (108 aa). Positions 135–165 are disordered; that stretch reads QPVAGSEGAQYRKKQLAKQLPAHDQDPSKCH. Positions 155–165 are enriched in basic and acidic residues; the sequence is PAHDQDPSKCH. LIM zinc-binding domains lie at 234-299, 300-359, and 360-422; these read YYCF…SEKP, RCAG…NHAV, and SCQG…KMSS.

The protein belongs to the prickle / espinas / testin family.

Its subcellular location is the cytoplasm. It is found in the cell cortex. The protein resides in the cell junction. The protein localises to the focal adhesion. Functionally, scaffold protein that may play a role in cell adhesion, cell spreading and in the reorganization of the actin cytoskeleton. May inhibit cell growth. Regulates cranial neural crest migration. Acts together with prickle1 to control axial elongation. The sequence is that of Testin from Xenopus tropicalis (Western clawed frog).